Here is a 357-residue protein sequence, read N- to C-terminus: Protein NDRG2 (357 aa).

Residues 1-14 show a composition bias toward basic and acidic residues; the sequence is MAELREVQITEEKP. A disordered region spans residues 1–26; sequence MAELREVQITEEKPLLPGQTPEVAKT. A2 carries the N-acetylalanine modification. T20 bears the Phosphothreonine mark. 2 positions are modified to phosphoserine: S312 and S314. At T316 the chain carries Phosphothreonine. S318 bears the Phosphoserine mark. Position 320 is a phosphothreonine (T320). Positions 320–357 are disordered; the sequence is TSAASIDGNRSRSRTLSQSSESGTLSSGPPGHTMEVSC. S321, S324, and S330 each carry phosphoserine. Residues 333 to 347 are compositionally biased toward low complexity; that stretch reads RTLSQSSESGTLSSG. Phosphothreonine is present on T334. A phosphoserine mark is found at S336, S338, S339, and S341. Residue T343 is modified to Phosphothreonine. S356 carries the phosphoserine modification.

The protein belongs to the NDRG family. In terms of assembly, interacts with CTNNB1.

The protein resides in the cytoplasm. Its subcellular location is the perinuclear region. The protein localises to the cell projection. It is found in the growth cone. Functionally, contributes to the regulation of the Wnt signaling pathway. Down-regulates CTNNB1-mediated transcriptional activation of target genes, such as CCND1, and may thereby act as tumor suppressor. May be involved in dendritic cell and neuron differentiation. This chain is Protein NDRG2 (NDRG2), found in Bos taurus (Bovine).